We begin with the raw amino-acid sequence, 302 residues long: Beta-lactamase (302 aa).

Residues Met-1 to Ala-11 are compositionally biased toward basic residues. Positions Met-1 to Ala-29 are cleaved as a signal peptide. The disordered stretch occupies residues Met-1–Pro-43. Residues Ser-26–Pro-36 are compositionally biased toward low complexity. The Acyl-ester intermediate role is filled by Ser-85. Ser-143 lines the substrate pocket. Glu-179 (proton acceptor) is an active-site residue. Residue Lys-247–Gly-249 participates in substrate binding.

It belongs to the class-A beta-lactamase family.

It is found in the secreted. It carries out the reaction a beta-lactam + H2O = a substituted beta-amino acid. Active on penicillins but not on cephalosporins. This is Beta-lactamase (bla) from Amycolatopsis lactamdurans (Nocardia lactamdurans).